The following is a 152-amino-acid chain: Phosphopantetheine adenylyltransferase (152 aa).

Substrate is bound at residue serine 9. Residues 9–10 (SF) and histidine 17 each bind ATP. Substrate is bound by residues lysine 41, threonine 73, and arginine 87. Residues 88–90 (GLR), glutamate 98, and 122–128 (TSFISSS) each bind ATP.

It belongs to the bacterial CoaD family. In terms of assembly, homohexamer. Requires Mg(2+) as cofactor.

The protein localises to the cytoplasm. It catalyses the reaction (R)-4'-phosphopantetheine + ATP + H(+) = 3'-dephospho-CoA + diphosphate. Its pathway is cofactor biosynthesis; coenzyme A biosynthesis; CoA from (R)-pantothenate: step 4/5. Its function is as follows. Reversibly transfers an adenylyl group from ATP to 4'-phosphopantetheine, yielding dephospho-CoA (dPCoA) and pyrophosphate. The chain is Phosphopantetheine adenylyltransferase from Flavobacterium johnsoniae (strain ATCC 17061 / DSM 2064 / JCM 8514 / BCRC 14874 / CCUG 350202 / NBRC 14942 / NCIMB 11054 / UW101) (Cytophaga johnsonae).